A 366-amino-acid chain; its full sequence is Chorismate synthase (366 aa).

Position 46 (Arg46) interacts with NADP(+). FMN contacts are provided by residues 122–124 (RSS), 243–244 (NG), Gly284, 299–303 (KPTPS), and Arg325.

This sequence belongs to the chorismate synthase family. In terms of assembly, homotetramer. FMNH2 serves as cofactor.

The enzyme catalyses 5-O-(1-carboxyvinyl)-3-phosphoshikimate = chorismate + phosphate. It functions in the pathway metabolic intermediate biosynthesis; chorismate biosynthesis; chorismate from D-erythrose 4-phosphate and phosphoenolpyruvate: step 7/7. Functionally, catalyzes the anti-1,4-elimination of the C-3 phosphate and the C-6 proR hydrogen from 5-enolpyruvylshikimate-3-phosphate (EPSP) to yield chorismate, which is the branch point compound that serves as the starting substrate for the three terminal pathways of aromatic amino acid biosynthesis. This reaction introduces a second double bond into the aromatic ring system. This is Chorismate synthase from Campylobacter hominis (strain ATCC BAA-381 / DSM 21671 / CCUG 45161 / LMG 19568 / NCTC 13146 / CH001A).